The following is a 197-amino-acid chain: Molybdenum cofactor guanylyltransferase (197 aa).

GTP-binding positions include 10 to 12, K23, N51, D69, and D99; that span reads LAG. D99 is a Mg(2+) binding site.

Belongs to the MobA family. As to quaternary structure, monomer. Requires Mg(2+) as cofactor.

It is found in the cytoplasm. It catalyses the reaction Mo-molybdopterin + GTP + H(+) = Mo-molybdopterin guanine dinucleotide + diphosphate. Functionally, transfers a GMP moiety from GTP to Mo-molybdopterin (Mo-MPT) cofactor (Moco or molybdenum cofactor) to form Mo-molybdopterin guanine dinucleotide (Mo-MGD) cofactor. The polypeptide is Molybdenum cofactor guanylyltransferase (Shewanella sp. (strain MR-4)).